Consider the following 180-residue polypeptide: Putative adenylate kinase (180 aa).

ATP is bound by residues glycine 10, glycine 12, lysine 13, threonine 14, and threonine 15. Positions 30 to 50 (NLRDFALEKGIGEVKGDELEV) are NMP. The segment at 99–109 (ERGYSKDKIGE) is LID. The ATP site is built by arginine 100 and lysine 138.

The protein belongs to the adenylate kinase family. AK6 subfamily. As to quaternary structure, interacts with uS11. Not a structural component of 40S pre-ribosomes, but transiently interacts with them by binding to uS11.

It carries out the reaction AMP + ATP = 2 ADP. The enzyme catalyses ATP + H2O = ADP + phosphate + H(+). In terms of biological role, broad-specificity nucleoside monophosphate (NMP) kinase that catalyzes the reversible transfer of the terminal phosphate group between nucleoside triphosphates and monophosphates. Also has ATPase activity. Involved in the late maturation steps of the 30S ribosomal particles, specifically 16S rRNA maturation. While NMP activity is not required for ribosome maturation, ATPase activity is. Associates transiently with small ribosomal subunit protein uS11. ATP hydrolysis breaks the interaction with uS11. May temporarily remove uS11 from the ribosome to enable a conformational change of the ribosomal RNA that is needed for the final maturation step of the small ribosomal subunit. This is Putative adenylate kinase from Pyrococcus furiosus (strain ATCC 43587 / DSM 3638 / JCM 8422 / Vc1).